The sequence spans 388 residues: Translation initiation factor eIF2B subunit beta (388 aa).

The segment at 109 to 133 (DDFETTTSNNNNNNNNNNINSSSNI) is disordered. Over residues 116–133 (SNNNNNNNNNNINSSSNI) the composition is skewed to low complexity.

It belongs to the eIF-2B alpha/beta/delta subunits family. In terms of assembly, component of the translation initiation factor 2B (eIF2B) complex which is a heterodecamer of two sets of five different subunits: alpha, beta, gamma, delta and epsilon. Subunits alpha, beta and delta comprise a regulatory subcomplex and subunits epsilon and gamma comprise a catalytic subcomplex. Within the complex, the hexameric regulatory complex resides at the center, with the two heterodimeric catalytic subcomplexes bound on opposite sides.

The protein resides in the cytoplasm. It localises to the cytosol. Its function is as follows. Acts as a component of the translation initiation factor 2B (eIF2B) complex, which catalyzes the exchange of GDP for GTP on eukaryotic initiation factor 2 (eIF2) gamma subunit. Its guanine nucleotide exchange factor activity is repressed when bound to eIF2 complex phosphorylated on the alpha subunit, thereby limiting the amount of methionyl-initiator methionine tRNA available to the ribosome and consequently global translation is repressed. The protein is Translation initiation factor eIF2B subunit beta (eif2b2) of Dictyostelium discoideum (Social amoeba).